The following is a 156-amino-acid chain: Transcription antitermination protein NusB (156 aa).

It belongs to the NusB family.

Its function is as follows. Involved in transcription antitermination. Required for transcription of ribosomal RNA (rRNA) genes. Binds specifically to the boxA antiterminator sequence of the ribosomal RNA (rrn) operons. This chain is Transcription antitermination protein NusB, found in Rickettsia akari (strain Hartford).